The following is a 132-amino-acid chain: MASRMGMVAILSLFVCALVASTSVNANVWQTDEDAFYSTNKLGVNGNMEMAQQQGGFIGHRPRLASFNRASKQLDREKRPVPSGPDPIHHSIPSHAPQHPPSYGKAPYEDDKSIASPGLSNLIGPPPFLDRY.

Residues 1 to 26 (MASRMGMVAILSLFVCALVASTSVNA) form the signal peptide. The tract at residues 68 to 132 (NRASKQLDRE…IGPPPFLDRY (65 aa)) is disordered. Proline 82 and proline 85 each carry hydroxyproline. An O-linked (Ara...) hydroxyproline glycan is attached at proline 85.

This sequence belongs to the CLV3/ESR signal peptide family. In terms of processing, the O-glycosylation (arabinosylation) of the hydroxyproline Pro-85 enhances binding affinity of the ESR2Bp peptide for its receptor. Seed endosperm.

It localises to the secreted. Its subcellular location is the extracellular space. Its function is as follows. Extracellular signal peptide that regulates cell fate. The polypeptide is CLAVATA3/ESR (CLE)-related protein 2-B (Zea mays (Maize)).